Here is a 72-residue protein sequence, read N- to C-terminus: SRY-related protein ADW5 (72 aa).

The HMG box DNA-binding region spans Val-1–Lys-69.

The protein localises to the nucleus. The polypeptide is SRY-related protein ADW5 (Alligator mississippiensis (American alligator)).